Here is a 100-residue protein sequence, read N- to C-terminus: Co-chaperonin GroES (100 aa).

This sequence belongs to the GroES chaperonin family. Heptamer of 7 subunits arranged in a ring. Interacts with the chaperonin GroEL.

Its subcellular location is the cytoplasm. Together with the chaperonin GroEL, plays an essential role in assisting protein folding. The GroEL-GroES system forms a nano-cage that allows encapsulation of the non-native substrate proteins and provides a physical environment optimized to promote and accelerate protein folding. GroES binds to the apical surface of the GroEL ring, thereby capping the opening of the GroEL channel. The chain is Co-chaperonin GroES from Rhodothermus marinus (Rhodothermus obamensis).